Consider the following 342-residue polypeptide: Antihemorrhagic factor cHLP-B (342 aa).

Positions 1–19 (MNSLVALVLLGQMIGSTLS) are cleaved as a signal peptide. 2 consecutive Cystatin fetuin-A-type domains span residues 20 to 129 (HHLQ…AKCH) and 140 to 253 (RNCP…SDCV). 6 disulfides stabilise this stretch: C28-C333, C85-C96, C110-C128, C142-C145, C204-C216, and C229-C252. An N-linked (GlcNAc...) asparagine glycan is attached at N95. An N-linked (GlcNAc...) asparagine glycan is attached at N203. Residues N281 and N292 are each glycosylated (N-linked (GlcNAc...) asparagine).

The protein belongs to the fetuin family. Homodimer. In terms of tissue distribution, expressed by the liver.

Its subcellular location is the secreted. Its function is as follows. Potent inhibitor of hemorrhagic activity but also proteolytic activities. Inhibition occurs by formation of a non-covalent complex between this protein and the proteinases at their metalloproteinase domains. This chain is Antihemorrhagic factor cHLP-B, found in Gloydius brevicauda (Korean slamosa snake).